We begin with the raw amino-acid sequence, 327 residues long: Flotillin-like protein FloA (327 aa).

A run of 2 helical transmembrane segments spans residues 8-28 (VLLI…LVPI) and 29-49 (PLWI…LVGM).

This sequence belongs to the flotillin-like FloA family. In terms of assembly, homooligomerizes.

It localises to the cell membrane. The protein localises to the membrane raft. Its function is as follows. Found in functional membrane microdomains (FMM) that may be equivalent to eukaryotic membrane rafts. FMMs are highly dynamic and increase in number as cells age. Flotillins are thought to be important factors in membrane fluidity. This chain is Flotillin-like protein FloA, found in Exiguobacterium sibiricum (strain DSM 17290 / CCUG 55495 / CIP 109462 / JCM 13490 / 255-15).